The sequence spans 192 residues: UPF0312 protein Avin_03250 (192 aa).

Residues 1 to 23 (MLKKTLAALALGSALLGAGQAMA) form the signal peptide.

It belongs to the UPF0312 family. Type 1 subfamily.

Its subcellular location is the periplasm. The chain is UPF0312 protein Avin_03250 from Azotobacter vinelandii (strain DJ / ATCC BAA-1303).